A 171-amino-acid chain; its full sequence is MSDTTQPPADDAQNVPPAMPLTINVQYIKDLSFEVPAGAEIFATLRANPQIAVNIDVQANRLQAEHPVFEVVLAIKTEALEAPEKEGAAPGRPVFIAELAYGAVVTLTNAPDELVEPILLVEVPRLIFPYVRNIISEVTRDGGFPPVVLQPIDFVALWQAKRSFPQTAGNA.

It belongs to the SecB family. In terms of assembly, homotetramer, a dimer of dimers. One homotetramer interacts with 1 SecA dimer.

It localises to the cytoplasm. In terms of biological role, one of the proteins required for the normal export of preproteins out of the cell cytoplasm. It is a molecular chaperone that binds to a subset of precursor proteins, maintaining them in a translocation-competent state. It also specifically binds to its receptor SecA. This is Protein-export protein SecB from Gluconacetobacter diazotrophicus (strain ATCC 49037 / DSM 5601 / CCUG 37298 / CIP 103539 / LMG 7603 / PAl5).